Here is a 75-residue protein sequence, read N- to C-terminus: Small ribosomal subunit protein bS18 (75 aa).

It belongs to the bacterial ribosomal protein bS18 family. Part of the 30S ribosomal subunit. Forms a tight heterodimer with protein bS6.

In terms of biological role, binds as a heterodimer with protein bS6 to the central domain of the 16S rRNA, where it helps stabilize the platform of the 30S subunit. The sequence is that of Small ribosomal subunit protein bS18 from Acinetobacter baylyi (strain ATCC 33305 / BD413 / ADP1).